We begin with the raw amino-acid sequence, 700 residues long: Elongation factor G 1 (700 aa).

In terms of domain architecture, tr-type G spans glutamate 8–isoleucine 290. Residues alanine 17–threonine 24, aspartate 88–histidine 92, and asparagine 142–aspartate 145 each bind GTP.

Belongs to the TRAFAC class translation factor GTPase superfamily. Classic translation factor GTPase family. EF-G/EF-2 subfamily.

It localises to the cytoplasm. In terms of biological role, catalyzes the GTP-dependent ribosomal translocation step during translation elongation. During this step, the ribosome changes from the pre-translocational (PRE) to the post-translocational (POST) state as the newly formed A-site-bound peptidyl-tRNA and P-site-bound deacylated tRNA move to the P and E sites, respectively. Catalyzes the coordinated movement of the two tRNA molecules, the mRNA and conformational changes in the ribosome. The chain is Elongation factor G 1 from Bordetella avium (strain 197N).